Consider the following 294-residue polypeptide: Nucleotide-binding protein Swol_0262 (294 aa).

Residue 15–22 (GLSGAGKT) participates in ATP binding. Residue 65 to 68 (DVRG) coordinates GTP.

It belongs to the RapZ-like family.

Its function is as follows. Displays ATPase and GTPase activities. This Syntrophomonas wolfei subsp. wolfei (strain DSM 2245B / Goettingen) protein is Nucleotide-binding protein Swol_0262.